A 370-amino-acid chain; its full sequence is Flagellar P-ring protein 1 (370 aa).

Residues 1 to 25 (MSVLIKTRHCFVLLGLWLVLPTASA) form the signal peptide.

This sequence belongs to the FlgI family. In terms of assembly, the basal body constitutes a major portion of the flagellar organelle and consists of four rings (L,P,S, and M) mounted on a central rod.

The protein resides in the periplasm. Its subcellular location is the bacterial flagellum basal body. Its function is as follows. Assembles around the rod to form the L-ring and probably protects the motor/basal body from shearing forces during rotation. The polypeptide is Flagellar P-ring protein 1 (Yersinia pestis).